Consider the following 238-residue polypeptide: Uridylate kinase (238 aa).

Residue 13-16 (KLSG) coordinates ATP. Gly53 is a binding site for UMP. Positions 54 and 58 each coordinate ATP. UMP-binding positions include Asp73 and 134 to 141 (AGLPYFST). Residues Asn162, Tyr168, and Asp171 each coordinate ATP.

It belongs to the UMP kinase family. In terms of assembly, homohexamer.

The protein localises to the cytoplasm. The enzyme catalyses UMP + ATP = UDP + ADP. The protein operates within pyrimidine metabolism; CTP biosynthesis via de novo pathway; UDP from UMP (UMPK route): step 1/1. Its activity is regulated as follows. Inhibited by UTP. Catalyzes the reversible phosphorylation of UMP to UDP. The chain is Uridylate kinase from Clavibacter michiganensis subsp. michiganensis (strain NCPPB 382).